Consider the following 406-residue polypeptide: Argininosuccinate synthase (406 aa).

8 to 16 (AYSGGLDTS) contacts ATP. Residue Y86 participates in L-citrulline binding. Position 116 (G116) interacts with ATP. 3 residues coordinate L-aspartate: T118, N122, and D123. N122 provides a ligand contact to L-citrulline. L-citrulline contacts are provided by R126, S174, S183, E259, and Y271.

The protein belongs to the argininosuccinate synthase family. Type 1 subfamily. In terms of assembly, homotetramer.

The protein localises to the cytoplasm. It carries out the reaction L-citrulline + L-aspartate + ATP = 2-(N(omega)-L-arginino)succinate + AMP + diphosphate + H(+). Its pathway is amino-acid biosynthesis; L-arginine biosynthesis; L-arginine from L-ornithine and carbamoyl phosphate: step 2/3. The sequence is that of Argininosuccinate synthase from Oenococcus oeni (strain ATCC BAA-331 / PSU-1).